We begin with the raw amino-acid sequence, 29 residues long: Dermaseptin-J6 (29 aa).

Val-29 carries the valine amide modification.

Expressed by the skin glands.

The protein resides in the secreted. In terms of biological role, has antimicrobial activity. This chain is Dermaseptin-J6, found in Phasmahyla jandaia (Jandaia leaf frog).